A 234-amino-acid polypeptide reads, in one-letter code: DNA repair and recombination protein RadB (234 aa).

The protein belongs to the eukaryotic RecA-like protein family. RadB subfamily.

Functionally, involved in DNA repair and in homologous recombination. May regulate the cleavage reactions of the branch-structured DNA. Has a very weak ATPase activity that is not stimulated by DNA. Binds DNA but does not promote DNA strands exchange. The sequence is that of DNA repair and recombination protein RadB from Methanobrevibacter smithii (strain ATCC 35061 / DSM 861 / OCM 144 / PS).